Here is a 339-residue protein sequence, read N- to C-terminus: Serine racemase (339 aa).

Glu-13 contributes to the Mg(2+) binding site. ATP-binding residues include Ser-31, Ser-32, Ile-33, Lys-51, and Thr-52. The active-site Proton acceptor is the Lys-56. Residue Lys-56 is modified to N6-(pyridoxal phosphate)lysine. Pro-69 is a binding site for Ca(2+). A Phosphothreonine modification is found at Thr-71. Thr-81 provides a ligand contact to Ca(2+). Catalysis depends on Ser-84, which acts as the Proton acceptor. Pyridoxal 5'-phosphate is bound at residue Asn-86. Gln-89 contacts ATP. Cys-113 is subject to S-nitrosocysteine. Tyr-121 serves as a coordination point for ATP. Residue Asn-154 participates in pyridoxal 5'-phosphate binding. Asp-178 is a Mg(2+) binding site. Residues Gly-185, Gly-186, Gly-187, Gly-188, and Met-189 each contribute to the pyridoxal 5'-phosphate site. Mg(2+) contacts are provided by Glu-210, Ala-214, Asp-216, and Asn-247. The Ca(2+) site is built by Glu-210, Ala-214, Asp-216, and Asn-247. Mn(2+) contacts are provided by Glu-210, Ala-214, and Asp-216. An ATP-binding site is contributed by Lys-279. Pyridoxal 5'-phosphate is bound at residue Ser-313. Residue Asn-316 participates in ATP binding.

This sequence belongs to the serine/threonine dehydratase family. As to quaternary structure, homodimer. Mg(2+) is required as a cofactor. Requires Mn(2+) as cofactor. Ca(2+) serves as cofactor. It depends on pyridoxal 5'-phosphate as a cofactor. S-nitrosylated, leading to decrease the enzyme activity. Expressed in the hippocampus (at protein level). Expressed in the small intestine.

The catalysed reaction is L-serine = D-serine. It carries out the reaction D-serine = pyruvate + NH4(+). The enzyme catalyses L-serine = pyruvate + NH4(+). With respect to regulation, allosterically activated by magnesium, and possibly also other divalent metal cations. Allosterically activated by ATP, ADP or GTP. Functionally, catalyzes the synthesis of D-serine from L-serine. D-serine is a key coagonist with glutamate at NMDA receptors. Has dehydratase activity towards both L-serine and D-serine. The sequence is that of Serine racemase (Srr) from Mus musculus (Mouse).